Reading from the N-terminus, the 250-residue chain is 1-(5-phosphoribosyl)-5-[(5-phosphoribosylamino)methylideneamino] imidazole-4-carboxamide isomerase (250 aa).

The active-site Proton acceptor is the Asp-12. The Proton donor role is filled by Asp-134.

Belongs to the HisA/HisF family.

The protein localises to the cytoplasm. It catalyses the reaction 1-(5-phospho-beta-D-ribosyl)-5-[(5-phospho-beta-D-ribosylamino)methylideneamino]imidazole-4-carboxamide = 5-[(5-phospho-1-deoxy-D-ribulos-1-ylimino)methylamino]-1-(5-phospho-beta-D-ribosyl)imidazole-4-carboxamide. Its pathway is amino-acid biosynthesis; L-histidine biosynthesis; L-histidine from 5-phospho-alpha-D-ribose 1-diphosphate: step 4/9. The protein is 1-(5-phosphoribosyl)-5-[(5-phosphoribosylamino)methylideneamino] imidazole-4-carboxamide isomerase of Actinobacillus pleuropneumoniae serotype 7 (strain AP76).